A 189-amino-acid chain; its full sequence is GMP synthase [glutamine-hydrolyzing] subunit A (189 aa).

The 189-residue stretch at 1-189 (MIVILNNGGQ…CKKCGFEFEE (189 aa)) folds into the Glutamine amidotransferase type-1 domain. Catalysis depends on C76, which acts as the Nucleophile. Catalysis depends on residues H163 and E165.

In terms of assembly, heterodimer composed of a glutamine amidotransferase subunit (A) and a GMP-binding subunit (B).

The catalysed reaction is XMP + L-glutamine + ATP + H2O = GMP + L-glutamate + AMP + diphosphate + 2 H(+). It functions in the pathway purine metabolism; GMP biosynthesis; GMP from XMP (L-Gln route): step 1/1. Its function is as follows. Catalyzes the synthesis of GMP from XMP. The chain is GMP synthase [glutamine-hydrolyzing] subunit A from Methanococcus maripaludis (strain C6 / ATCC BAA-1332).